The primary structure comprises 273 residues: WIMGHMVNAIAQIDEFVNLGANSIETDVSFDSSANPEYTYHGVPCDCGRTCTKWEHFNEFLKGLRKATTPGDSKYHEKLVLVVFDLKTGSLYDNQASDAGKKLAKSLLQNYWNNGNNGGRAYIVLSIPNLAHYKLITGFKEALTSEGHPELMDKVGYDFSGNDDIGDVANAYKKAGVTGHVWQSDGITNCLLRGLDRVRKAVANRDSSSGYINKVHYWTVDKRQSTRDALDAGVDGIMTNYPDVIADVLNESAYKAKFRIASYDDNPWETFKN.

H5 is a catalytic residue. Residues E25 and D27 each coordinate Mg(2+). The active-site Nucleophile is H41. Intrachain disulfides connect C45–C51 and C47–C190. D85 contributes to the Mg(2+) binding site. N-linked (GlcNAc...) asparagine glycosylation occurs at N250.

Belongs to the arthropod phospholipase D family. Class II subfamily. Mg(2+) serves as cofactor. In terms of tissue distribution, expressed by the venom gland.

It localises to the secreted. It carries out the reaction an N-(acyl)-sphingosylphosphocholine = an N-(acyl)-sphingosyl-1,3-cyclic phosphate + choline. The enzyme catalyses an N-(acyl)-sphingosylphosphoethanolamine = an N-(acyl)-sphingosyl-1,3-cyclic phosphate + ethanolamine. It catalyses the reaction a 1-acyl-sn-glycero-3-phosphocholine = a 1-acyl-sn-glycero-2,3-cyclic phosphate + choline. The catalysed reaction is a 1-acyl-sn-glycero-3-phosphoethanolamine = a 1-acyl-sn-glycero-2,3-cyclic phosphate + ethanolamine. Functionally, dermonecrotic toxins cleave the phosphodiester linkage between the phosphate and headgroup of certain phospholipids (sphingolipid and lysolipid substrates), forming an alcohol (often choline) and a cyclic phosphate. This toxin acts on sphingomyelin (SM). It may also act on ceramide phosphoethanolamine (CPE), lysophosphatidylcholine (LPC) and lysophosphatidylethanolamine (LPE), but not on lysophosphatidylserine (LPS), and lysophosphatidylglycerol (LPG). It acts by transphosphatidylation, releasing exclusively cyclic phosphate products as second products. Induces dermonecrosis, hemolysis, increased vascular permeability, edema, inflammatory response, and platelet aggregation. This Loxosceles apachea (Apache recluse spider) protein is Dermonecrotic toxin LapSicTox-alphaIB1aii.